Reading from the N-terminus, the 282-residue chain is MQEIFLCSISNVRSGDCKEDCAYCTQSSHHQGAIKRYKFKDEKVVLQEARALRELGALGFCLVTSGRELDDEKCEYIAKLAKAINQEELGLHLIACCGRADLEQLEFLRDAGIHSYNHNLETSQNFFPKICSTHTWEERFITCENALRAGLGLCSGGIFGLNESWEDRIEMLRALASLSPHTTPINFFIKNPVLPIDAETLSADEALECVLLAKEFLPNARLMVAGGREVVFKDNDKKEAKLFEYGINAVVLGDYLTTKGKAPKKDIEKLLSYGLTMATSCH.

The Radical SAM core domain occupies 1–228 (MQEIFLCSIS…NARLMVAGGR (228 aa)). [4Fe-4S] cluster contacts are provided by C17, C21, and C24. [2Fe-2S] cluster is bound by residues C61, C96, C154, and R221.

The protein belongs to the radical SAM superfamily. Biotin synthase family. In terms of assembly, homodimer. It depends on [4Fe-4S] cluster as a cofactor. The cofactor is [2Fe-2S] cluster.

It catalyses the reaction (4R,5S)-dethiobiotin + (sulfur carrier)-SH + 2 reduced [2Fe-2S]-[ferredoxin] + 2 S-adenosyl-L-methionine = (sulfur carrier)-H + biotin + 2 5'-deoxyadenosine + 2 L-methionine + 2 oxidized [2Fe-2S]-[ferredoxin]. The protein operates within cofactor biosynthesis; biotin biosynthesis; biotin from 7,8-diaminononanoate: step 2/2. Functionally, catalyzes the conversion of dethiobiotin (DTB) to biotin by the insertion of a sulfur atom into dethiobiotin via a radical-based mechanism. The sequence is that of Biotin synthase from Helicobacter pylori (strain HPAG1).